The sequence spans 228 residues: Large ribosomal subunit protein uL16 (228 aa).

It belongs to the universal ribosomal protein uL16 family. Component of the small ribosomal subunit. Mature ribosomes consist of a small (40S) and a large (60S) subunit. The 40S subunit contains about 33 different proteins and 1 molecule of RNA (18S). The 60S subunit contains about 49 different proteins and 3 molecules of RNA (25S, 5.8S and 5S).

The chain is Large ribosomal subunit protein uL16 (RPL10) from Pinus taeda (Loblolly pine).